The following is a 569-amino-acid chain: Dicarboxylate transporter 1, chloroplastic (569 aa).

The N-terminal 93 residues, methionine 1–proline 93, are a transit peptide targeting the chloroplast. Positions serine 23–proline 74 are enriched in low complexity. The interval serine 23 to proline 93 is disordered. Residues threonine 75–valine 90 are compositionally biased toward pro residues. 12 consecutive transmembrane segments (helical) span residues proline 106–valine 126, leucine 134–valine 154, alanine 172–alanine 192, alanine 241–glycine 261, leucine 268–leucine 288, alanine 317–tyrosine 337, isoleucine 367–valine 387, aspartate 388–tryptophan 408, tryptophan 423–phenylalanine 443, valine 450–phenylalanine 470, phenylalanine 490–phenylalanine 510, and tyrosine 543–tryptophan 563.

The protein belongs to the SLC13A/DASS transporter (TC 2.A.47) family. DIT1 subfamily. In terms of assembly, monomer. The N-terminus is blocked. In terms of tissue distribution, expressed in leaves.

It is found in the plastid. The protein localises to the chloroplast inner membrane. Its function is as follows. 2-oxoglutarate/malate translocator that transports carbon skeletons into chloroplasts for net glutamate synthesis. This translocator exchanges malate for internal succinate, fumarate and 2-oxoglutarate but not for aspartate and glutamate. Involved with DIT2 in primary ammonia assimilation and in the re-assimilation of ammonia generated by the photorespiratory pathway. Imports 2-oxoglutarate into plastids as precursor for ammonia assimilation. 2-oxoglutarate is converted to glutamate, the end product of ammonia assimilation, which is exported to the cytosol by DIT2. In Spinacia oleracea (Spinach), this protein is Dicarboxylate transporter 1, chloroplastic (DIT1).